A 536-amino-acid chain; its full sequence is Uridine 5'-monophosphate transferase (536 aa).

Residues 22–84 form a disordered region; that stretch reads ADHPTHTPED…GLQQCSSSPS (63 aa). Residues 31–45 are compositionally biased toward polar residues; sequence DSPQTVPSPRSSSAH. The span at 48-60 shows a compositional bias: basic and acidic residues; the sequence is EIQELRSLQETRP. Positions 66–84 are enriched in polar residues; sequence RSQSRSSKHGLQQCSSSPS. LRR repeat units follow at residues 140 to 164, 165 to 189, 191 to 211, 212 to 234, 236 to 257, and 258 to 282; these read AGQA…LHRL, AHLR…SLCK, LERI…IGAL, KNLS…IGQC, SLTT…LANL, and TQLK…NLDD. Residues 377–533 enclose the Fido domain; that stretch reads ITLDRIFKLN…LEGIATVMNQ (157 aa).

The protein in the C-terminal section; belongs to the fic family. In terms of assembly, interacts with several members of the Arabidopsis RLCK VIIa subfamily.

Its subcellular location is the secreted. The protein resides in the host cell. The protein localises to the host cell membrane. It catalyses the reaction L-seryl-[protein] + UTP = O-(5'-uridylyl)-L-seryl-[protein] + diphosphate. It carries out the reaction L-threonyl-[protein] + UTP = uridylyl-L-threonyl-[protein] + diphosphate. In terms of biological role, functions both as a virulence and an avirulence gene in Arabidopsis. Causes disease on the Kashmir (Kas) ecotype, but not on Columbia (Col-0) ecotype. Acts by directly uridylylating the conserved phosphorylation sites in the activation loop of a number of host receptor-like cytoplasmic protein kinases (RLCK), including BIK1, RIPK, PBL1 and PBL2, preventing the activation of these kinases and subsequent signal transduction. In susceptible Arabidopsis plants, uridylylation of BIK1 inhibits the PAMP-triggered immunity (PTI) signaling cascade and thereby promotes bacterial virulence. It also inhibits RPM1-dependent effector-triggered immunity (ETI) in mesophyll tissues by targeting RIPK. In contrast, in the resistant ecotype Col-0, xopAC is a major avirulence gene. Uridylylation of PBL2 triggers the PBL2-RKS1 interaction and thus the assembly of the PBL2-RKS1-ZAR1 complex, which, in turn, activates effector-triggered immunity (ETI) against X.campestris. The chain is Uridine 5'-monophosphate transferase from Xanthomonas campestris pv. campestris (strain 8004).